Here is a 429-residue protein sequence, read N- to C-terminus: Transcription factor IIIA (429 aa).

The tract at residues 1 to 45 (MGGEVLNNEGMPLAELKQETIPISRSESSESLNSLTSTRSSSSNR) is disordered. Over residues 24-44 (SRSESSESLNSLTSTRSSSSN) the composition is skewed to low complexity. 9 C2H2-type zinc fingers span residues 49-74 (YFCD…LSVH), 80-102 (FQCD…LYTH), 108-130 (FQCS…EVTH), 134-159 (FICP…LSVH), 163-186 (LTCP…SKHH), 194-219 (YQCT…KNDH), 222-244 (LKCP…MIIH), 253-277 (WKCH…GSIH), and 365-389 (YRCF…IDKH). Positions 406–416 (KTLVDQNHKEP) are enriched in basic and acidic residues. The disordered stretch occupies residues 406-429 (KTLVDQNHKEPFIIQKETQSAGDK).

It is found in the nucleus. Interacts with the internal control region (ICR) of approximately 50 bases within the 5S RNA genes, is required for correct transcription of these genes by RNA polymerase III. Also binds the transcribed 5S RNA's. The polypeptide is Transcription factor IIIA (PZF1) (Saccharomyces cerevisiae (strain ATCC 204508 / S288c) (Baker's yeast)).